A 273-amino-acid chain; its full sequence is Beta-lactamase OXA-23 (273 aa).

A signal peptide spans 1–17 (MNKYFTCYVVASLFLSG). The active-site Acyl-ester intermediate is the serine 79. Serine 79, lysine 82, serine 126, threonine 217, tryptophan 219, and arginine 259 together coordinate a beta-lactam. N6-carboxylysine is present on lysine 82.

It belongs to the class-D beta-lactamase family. Monomer. Post-translationally, carboxylated on the epsilon-amino group of a lysine, with the resulting carbamate functional group serving as a general base. Probably N-carboxylated at Lys-82 at neutral pH in vivo and undergoes complete N-decarboxylation, at pH 4.1, in vitro.

It localises to the periplasm. It catalyses the reaction a beta-lactam + H2O = a substituted beta-amino acid. With respect to regulation, inhibited by the desmethyl carbapenem, MA-1-206, via a covalent binding to Ser-79. Its function is as follows. Class D beta-lactamase which confers resistance to the beta-lactam antibiotics, including ampicillin, and carbapenems such as imipenem and meropenem. Acts via hydrolysis of the beta-lactam ring. Has penicillin-, cephalosporin- and carbapenem-hydrolyzing activities, but lacks ceftazidime-hydrolyzing activity. The polypeptide is Beta-lactamase OXA-23 (Acinetobacter baumannii).